The primary structure comprises 560 residues: MGWKYLLSDIEIAQQCKMKKITEIAASLDITPDELELYGSYKAKLADSLEKRLADKPNGKLILVTAINPTPAGEGKTTTTVGLGQAMPKIGKKAVIALREPSLGPVFGVKGGAAGGGYSQVVPMEDINLHFTGDFHAITSANNLLCAMIDNHIQQGNALDIDTRRIIFKRCLDMNDRALRNIIIGLGGQTNGVPREDHFMITVASEVMAILCLANDIDDLKERLGNVIFGYSRKGTPLYARDLKAVGAMAALLKDAIKPNLVQTLENTPCFIHGGPFANIAHGCNSVRATKLSLKMADYVITEAGFGSDLGAEKFFDIKCRYAGLTPNTVVLVATVRALKYNGGVKKEDTTIPNVAALKAGMVNLEAHIQNLQTFGVPVVVAINRFSTDTDEELAVLKEFCTAQGAEFAISEVFAKGGEGGVELAKKVVASCEKPQKFQCLYELNTPIKEKINALATRIYGADGVVYSPAADAAIKDIDALGRSNLPICMAKTQYSLSDDPNKLGRPKNFVINAATVRLCNGAGFIVVETGDIMTLPGLPAVPAACSIDVNNDGYISGLF.

Residue 70 to 77 (TPAGEGKT) participates in ATP binding.

This sequence belongs to the formate--tetrahydrofolate ligase family.

It carries out the reaction (6S)-5,6,7,8-tetrahydrofolate + formate + ATP = (6R)-10-formyltetrahydrofolate + ADP + phosphate. The protein operates within one-carbon metabolism; tetrahydrofolate interconversion. This chain is Formate--tetrahydrofolate ligase, found in Methanocorpusculum labreanum (strain ATCC 43576 / DSM 4855 / Z).